Reading from the N-terminus, the 457-residue chain is Vasoactive intestinal polypeptide receptor 1 (457 aa).

Residues 1 to 30 form the signal peptide; the sequence is MRPPSPLPARWLCVLAGALAWALGPAGGQA. Residues 31 to 141 lie on the Extracellular side of the membrane; that stretch reads ARLQEECDYV…DEQQTMFYGS (111 aa). Cystine bridges form between Cys-37-Cys-208, Cys-50-Cys-72, Cys-63-Cys-105, Cys-86-Cys-122, and Cys-215-Cys-285. Residues Asn-58, Asn-69, and Asn-100 are each glycosylated (N-linked (GlcNAc...) asparagine). The helical transmembrane segment at 142-166 threads the bilayer; the sequence is VKTGYTIGYGLSLATLLVATAILSL. Residues 167–174 lie on the Cytoplasmic side of the membrane; that stretch reads FRKLHCTR. The helical transmembrane segment at 175-196 threads the bilayer; sequence NYIHMHLFISFILRAAAVFIKD. Over 197 to 216 the chain is Extracellular; that stretch reads LALFDSGESDQCSEGSVGCK. The helical transmembrane segment at 217–241 threads the bilayer; that stretch reads AAMVFFQYCVMANFFWLLVEGLYLY. Over 242-254 the chain is Cytoplasmic; it reads TLLAVSFFSERKY. The helical transmembrane segment at 255–276 threads the bilayer; that stretch reads FWGYILIGWGVPSTFTMVWTIA. Topologically, residues 277 to 291 are extracellular; sequence RIHFEDYGCWDTINS. A glycan (N-linked (GlcNAc...) asparagine) is linked at Asn-290. The helical transmembrane segment at 292–316 threads the bilayer; sequence SLWWIIKGPILTSILVNFILFICII. Topologically, residues 317–338 are cytoplasmic; the sequence is RILLQKLRPPDIRKSDSSPYSR. Residues 339–359 traverse the membrane as a helical segment; the sequence is LARSTLLLIPLFGVHYIMFAF. Over 360–367 the chain is Extracellular; it reads FPDNFKPE. A helical transmembrane segment spans residues 368-391; the sequence is VKMVFELVVGSFQGFVVAILYCFL. The Cytoplasmic portion of the chain corresponds to 392-457; sequence NGEVQAELRR…SSFQAEVSLV (66 aa).

The protein belongs to the G-protein coupled receptor 2 family. Interacts with ADCYAP1/PACAP; activated by both PACAP27 and PACAP38 neuropeptides. Interacts with VIP; the interaction results in VIPR1 activation. In terms of tissue distribution, in lung, HT-29 colonic epithelial cells, Raji B-lymphoblasts. Lesser extent in brain, heart, kidney, liver and placenta. Not expressed in CD4+ or CD8+ T-cells. Expressed in the T-cell lines HARRIS, HuT 78, Jurkat and SUP-T1, but not in the T-cell lines Peer, MOLT-4, HSB and YT.

The protein resides in the cell membrane. Its function is as follows. G protein-coupled receptor activated by the neuropeptides vasoactive intestinal peptide (VIP) and pituitary adenylate cyclase-activating polypeptide (ADCYAP1/PACAP). Binds VIP and both PACAP27 and PACAP38 bioactive peptides with the following order of ligand affinity VIP = PACAP27 &gt; PACAP38. Ligand binding causes a conformation change that triggers signaling via guanine nucleotide-binding proteins (G proteins) and modulates the activity of downstream effectors. Activates cAMP-dependent pathway. The polypeptide is Vasoactive intestinal polypeptide receptor 1 (Homo sapiens (Human)).